Consider the following 281-residue polypeptide: Endochitinase At2g43610 (281 aa).

Residues 1-28 form the signal peptide; the sequence is MATQNAILKKALIIFLFTLTIMTGTAFS. A Chitin-binding type-1 domain is found at 29 to 66; sequence QNCGTNGCKGNMCCSRWGYCGTTKAYCGTGCQSGPCNS. 4 disulfides stabilise this stretch: Cys-31–Cys-42, Cys-36–Cys-48, Cys-41–Cys-55, and Cys-59–Cys-64. Residues 86–281 form a catalytic region; that stretch reads GTIASVITPA…GVTPGTNLSC (196 aa). The active-site Proton donor is Glu-148. A glycan (N-linked (GlcNAc...) asparagine) is linked at Asn-278.

This sequence belongs to the glycosyl hydrolase 19 family. Chitinase class I subfamily.

The catalysed reaction is Random endo-hydrolysis of N-acetyl-beta-D-glucosaminide (1-&gt;4)-beta-linkages in chitin and chitodextrins.. The protein is Endochitinase At2g43610 of Arabidopsis thaliana (Mouse-ear cress).